The following is a 482-amino-acid chain: Methylenetetrahydrofolate--tRNA-(uracil-5-)-methyltransferase TrmFO (482 aa).

11 to 16 (GGGLAG) provides a ligand contact to FAD. The disordered stretch occupies residues 450 to 482 (LRQPSPWSAEDSPRAALPIPEPTPLGPASGSSE).

Belongs to the MnmG family. TrmFO subfamily. FAD serves as cofactor.

The protein resides in the cytoplasm. It carries out the reaction uridine(54) in tRNA + (6R)-5,10-methylene-5,6,7,8-tetrahydrofolate + NADH + H(+) = 5-methyluridine(54) in tRNA + (6S)-5,6,7,8-tetrahydrofolate + NAD(+). The catalysed reaction is uridine(54) in tRNA + (6R)-5,10-methylene-5,6,7,8-tetrahydrofolate + NADPH + H(+) = 5-methyluridine(54) in tRNA + (6S)-5,6,7,8-tetrahydrofolate + NADP(+). Functionally, catalyzes the folate-dependent formation of 5-methyl-uridine at position 54 (M-5-U54) in all tRNAs. The polypeptide is Methylenetetrahydrofolate--tRNA-(uracil-5-)-methyltransferase TrmFO (Rhodospirillum rubrum (strain ATCC 11170 / ATH 1.1.1 / DSM 467 / LMG 4362 / NCIMB 8255 / S1)).